Here is a 272-residue protein sequence, read N- to C-terminus: Probable FKBP-type peptidyl-prolyl cis-trans isomerase FkpA (272 aa).

A signal peptide spans M1–A20. Residue C21 is the site of N-palmitoyl cysteine attachment. Residue C21 is the site of S-diacylglycerol cysteine attachment. Positions A29–A40 are enriched in low complexity. The tract at residues A29–G48 is disordered. In terms of domain architecture, PPIase FKBP-type spans D167–G253.

This sequence belongs to the FKBP-type PPIase family.

The protein localises to the cell membrane. It carries out the reaction [protein]-peptidylproline (omega=180) = [protein]-peptidylproline (omega=0). The sequence is that of Probable FKBP-type peptidyl-prolyl cis-trans isomerase FkpA (fkpA) from Neisseria meningitidis serogroup B (strain ATCC BAA-335 / MC58).